The primary structure comprises 875 residues: SPbeta prophage-derived uncharacterized protein YomG (875 aa).

The stretch at 351 to 381 (AKKAEISRINSQITNISQEIEKLKDRLSMDK) forms a coiled coil. The Fibronectin type-III domain maps to 537–648 (PVANPTILNN…SIDSSGRILS (112 aa)).

This chain is SPbeta prophage-derived uncharacterized protein YomG (yomG), found in Bacillus subtilis (strain 168).